We begin with the raw amino-acid sequence, 339 residues long: Anthranilate phosphoribosyltransferase (339 aa).

Residues G82, 85–86, 92–95, 110–118, and S122 contribute to the 5-phospho-alpha-D-ribose 1-diphosphate site; these read GD, NIST, and KHGNRGISS. Residue G82 coordinates anthranilate. Mg(2+) is bound at residue S94. Anthranilate is bound at residue N113. Anthranilate is bound at residue R168. Residues D227 and E228 each coordinate Mg(2+).

The protein belongs to the anthranilate phosphoribosyltransferase family. As to quaternary structure, homodimer. Mg(2+) is required as a cofactor.

The enzyme catalyses N-(5-phospho-beta-D-ribosyl)anthranilate + diphosphate = 5-phospho-alpha-D-ribose 1-diphosphate + anthranilate. It participates in amino-acid biosynthesis; L-tryptophan biosynthesis; L-tryptophan from chorismate: step 2/5. Functionally, catalyzes the transfer of the phosphoribosyl group of 5-phosphorylribose-1-pyrophosphate (PRPP) to anthranilate to yield N-(5'-phosphoribosyl)-anthranilate (PRA). The polypeptide is Anthranilate phosphoribosyltransferase (Vesicomyosocius okutanii subsp. Calyptogena okutanii (strain HA)).